We begin with the raw amino-acid sequence, 328 residues long: Flap endonuclease 1 (328 aa).

Residues 1 to 98 form an N-domain region; it reads MGVKLRDVVS…ETVSRRADIR (98 aa). Positions 27, 80, 152, 154, 173, 175, and 226 each coordinate Mg(2+). Positions 116–247 are I-domain; that stretch reads RAKKYAVRSS…RGLKLIREKG (132 aa). The interval 320–328 is interaction with PCNA; that stretch reads TQKSLEDWF.

Belongs to the XPG/RAD2 endonuclease family. FEN1 subfamily. As to quaternary structure, interacts with PCNA. PCNA stimulates the nuclease activity without altering cleavage specificity. Mg(2+) is required as a cofactor.

In terms of biological role, structure-specific nuclease with 5'-flap endonuclease and 5'-3' exonuclease activities involved in DNA replication and repair. During DNA replication, cleaves the 5'-overhanging flap structure that is generated by displacement synthesis when DNA polymerase encounters the 5'-end of a downstream Okazaki fragment. Binds the unpaired 3'-DNA end and kinks the DNA to facilitate 5' cleavage specificity. Cleaves one nucleotide into the double-stranded DNA from the junction in flap DNA, leaving a nick for ligation. Also involved in the base excision repair (BER) pathway. Acts as a genome stabilization factor that prevents flaps from equilibrating into structures that lead to duplications and deletions. Also possesses 5'-3' exonuclease activity on nicked or gapped double-stranded DNA. The chain is Flap endonuclease 1 from Methanothermobacter thermautotrophicus (strain ATCC 29096 / DSM 1053 / JCM 10044 / NBRC 100330 / Delta H) (Methanobacterium thermoautotrophicum).